The sequence spans 107 residues: Glutaredoxin 4 (107 aa).

One can recognise a Glutaredoxin domain in the interval 4 to 106; that stretch reads LDKIKKQISE…TLLAEVAAKH (103 aa). Lysine 21 is a glutathione binding site. Position 29 (cysteine 29) interacts with [2Fe-2S] cluster. Glutathione contacts are provided by residues arginine 58, phenylalanine 70, and 83–84; that span reads CD.

The protein belongs to the glutaredoxin family. Monothiol subfamily. Homodimer.

The protein resides in the cytoplasm. Monothiol glutaredoxin involved in the biogenesis of iron-sulfur clusters. The protein is Glutaredoxin 4 (grxD) of Haemophilus influenzae (strain 86-028NP).